A 315-amino-acid polypeptide reads, in one-letter code: N-acetyl-gamma-glutamyl-phosphate reductase (315 aa).

Cys117 is an active-site residue.

Belongs to the NAGSA dehydrogenase family. Type 2 subfamily.

The protein localises to the cytoplasm. It carries out the reaction N-acetyl-L-glutamate 5-semialdehyde + phosphate + NADP(+) = N-acetyl-L-glutamyl 5-phosphate + NADPH + H(+). The protein operates within amino-acid biosynthesis; L-arginine biosynthesis; N(2)-acetyl-L-ornithine from L-glutamate: step 3/4. Functionally, catalyzes the NADPH-dependent reduction of N-acetyl-5-glutamyl phosphate to yield N-acetyl-L-glutamate 5-semialdehyde. This is N-acetyl-gamma-glutamyl-phosphate reductase from Burkholderia lata (strain ATCC 17760 / DSM 23089 / LMG 22485 / NCIMB 9086 / R18194 / 383).